The sequence spans 99 residues: ATP synthase subunit c (99 aa).

The next 2 membrane-spanning stretches (helical) occupy residues 23-43 (GAGIGYGLVAVGAGLAMIGAL) and 78-98 (MGIAETAAIYSLIIAILLIFV).

The protein belongs to the ATPase C chain family. In terms of assembly, F-type ATPases have 2 components, F(1) - the catalytic core - and F(0) - the membrane proton channel. F(1) has five subunits: alpha(3), beta(3), gamma(1), delta(1), epsilon(1). F(0) has three main subunits: a(1), b(2) and c(10-14). The alpha and beta chains form an alternating ring which encloses part of the gamma chain. F(1) is attached to F(0) by a central stalk formed by the gamma and epsilon chains, while a peripheral stalk is formed by the delta and b chains.

The protein resides in the cell membrane. Its function is as follows. F(1)F(0) ATP synthase produces ATP from ADP in the presence of a proton or sodium gradient. F-type ATPases consist of two structural domains, F(1) containing the extramembraneous catalytic core and F(0) containing the membrane proton channel, linked together by a central stalk and a peripheral stalk. During catalysis, ATP synthesis in the catalytic domain of F(1) is coupled via a rotary mechanism of the central stalk subunits to proton translocation. Functionally, key component of the F(0) channel; it plays a direct role in translocation across the membrane. A homomeric c-ring of between 10-14 subunits forms the central stalk rotor element with the F(1) delta and epsilon subunits. This chain is ATP synthase subunit c, found in Mycoplasma mobile (strain ATCC 43663 / 163K / NCTC 11711) (Mesomycoplasma mobile).